The chain runs to 219 residues: Ribose-5-phosphate isomerase A (219 aa).

Residues 28–31 (TGST), 81–84 (DGAD), and 94–97 (KGGG) contribute to the substrate site. Glu103 acts as the Proton acceptor in catalysis. A substrate-binding site is contributed by Lys121.

The protein belongs to the ribose 5-phosphate isomerase family. In terms of assembly, homodimer.

It catalyses the reaction aldehydo-D-ribose 5-phosphate = D-ribulose 5-phosphate. Its pathway is carbohydrate degradation; pentose phosphate pathway; D-ribose 5-phosphate from D-ribulose 5-phosphate (non-oxidative stage): step 1/1. Its function is as follows. Catalyzes the reversible conversion of ribose-5-phosphate to ribulose 5-phosphate. The chain is Ribose-5-phosphate isomerase A from Photobacterium profundum (strain SS9).